The following is a 595-amino-acid chain: Potassium-transporting ATPase potassium-binding subunit (595 aa).

The next 10 membrane-spanning stretches (helical) occupy residues isoleucine 9–alanine 29, threonine 63–leucine 83, glycine 135–isoleucine 155, isoleucine 177–valine 197, phenylalanine 285–methionine 305, glycine 312–leucine 332, glycine 412–glycine 432, alanine 451–leucine 471, leucine 516–isoleucine 536, and phenylalanine 560–leucine 580.

The protein belongs to the KdpA family. The system is composed of three essential subunits: KdpA, KdpB and KdpC.

The protein resides in the cell inner membrane. Functionally, part of the high-affinity ATP-driven potassium transport (or Kdp) system, which catalyzes the hydrolysis of ATP coupled with the electrogenic transport of potassium into the cytoplasm. This subunit binds the periplasmic potassium ions and delivers the ions to the membrane domain of KdpB through an intramembrane tunnel. The polypeptide is Potassium-transporting ATPase potassium-binding subunit (Methylococcus capsulatus (strain ATCC 33009 / NCIMB 11132 / Bath)).